We begin with the raw amino-acid sequence, 177 residues long: Large ribosomal subunit protein uL6 (177 aa).

It belongs to the universal ribosomal protein uL6 family. In terms of assembly, part of the 50S ribosomal subunit.

Functionally, this protein binds to the 23S rRNA, and is important in its secondary structure. It is located near the subunit interface in the base of the L7/L12 stalk, and near the tRNA binding site of the peptidyltransferase center. The polypeptide is Large ribosomal subunit protein uL6 (Acinetobacter baumannii (strain SDF)).